A 296-amino-acid chain; its full sequence is Nitrogenase iron protein 1 (296 aa).

11–18 (GKGGIGKS) contacts ATP. Cysteine 99 lines the [4Fe-4S] cluster pocket. Arginine 102 is modified (ADP-ribosylarginine; by dinitrogenase reductase ADP-ribosyltransferase). Cysteine 133 serves as a coordination point for [4Fe-4S] cluster.

The protein belongs to the NifH/BchL/ChlL family. Homodimer. [4Fe-4S] cluster serves as cofactor. The reversible ADP-ribosylation of Arg-102 inactivates the nitrogenase reductase and regulates nitrogenase activity.

It carries out the reaction N2 + 8 reduced [2Fe-2S]-[ferredoxin] + 16 ATP + 16 H2O = H2 + 8 oxidized [2Fe-2S]-[ferredoxin] + 2 NH4(+) + 16 ADP + 16 phosphate + 6 H(+). Its function is as follows. The key enzymatic reactions in nitrogen fixation are catalyzed by the nitrogenase complex, which has 2 components: the iron protein and the molybdenum-iron protein. The chain is Nitrogenase iron protein 1 (nifH1) from Azorhizobium caulinodans (strain ATCC 43989 / DSM 5975 / JCM 20966 / LMG 6465 / NBRC 14845 / NCIMB 13405 / ORS 571).